The sequence spans 227 residues: 2-C-methyl-D-erythritol 4-phosphate cytidylyltransferase (227 aa).

Belongs to the IspD/TarI cytidylyltransferase family. IspD subfamily.

It carries out the reaction 2-C-methyl-D-erythritol 4-phosphate + CTP + H(+) = 4-CDP-2-C-methyl-D-erythritol + diphosphate. It functions in the pathway isoprenoid biosynthesis; isopentenyl diphosphate biosynthesis via DXP pathway; isopentenyl diphosphate from 1-deoxy-D-xylulose 5-phosphate: step 2/6. Catalyzes the formation of 4-diphosphocytidyl-2-C-methyl-D-erythritol from CTP and 2-C-methyl-D-erythritol 4-phosphate (MEP). This is 2-C-methyl-D-erythritol 4-phosphate cytidylyltransferase from Bordetella bronchiseptica (strain ATCC BAA-588 / NCTC 13252 / RB50) (Alcaligenes bronchisepticus).